A 518-amino-acid polypeptide reads, in one-letter code: Protease Do-like 4, mitochondrial (518 aa).

The transit peptide at 1–23 directs the protein to the mitochondrion; sequence MLFRFLQTLARFCRFLLISVLGF. Residues 98–262 form a serine protease region; sequence ESGGSGFVIS…IPTPVIKHFL (165 aa). Active-site charge relay system residues include histidine 116, aspartate 147, and serine 225. In terms of domain architecture, PDZ spans 278-358; it reads DISYQLMENS…HFVSMKKLDE (81 aa).

The protein belongs to the peptidase S1C family.

The protein localises to the mitochondrion membrane. Functionally, putative serine protease. This chain is Protease Do-like 4, mitochondrial (DEGP4), found in Arabidopsis thaliana (Mouse-ear cress).